We begin with the raw amino-acid sequence, 89 residues long: Small ribosomal subunit protein uS15 (89 aa).

Positions 1–20 (MSITAERKAELIKTHARGEA) are enriched in basic and acidic residues. The interval 1 to 24 (MSITAERKAELIKTHARGEADTGS) is disordered.

The protein belongs to the universal ribosomal protein uS15 family. Part of the 30S ribosomal subunit. Forms a bridge to the 50S subunit in the 70S ribosome, contacting the 23S rRNA.

Functionally, one of the primary rRNA binding proteins, it binds directly to 16S rRNA where it helps nucleate assembly of the platform of the 30S subunit by binding and bridging several RNA helices of the 16S rRNA. In terms of biological role, forms an intersubunit bridge (bridge B4) with the 23S rRNA of the 50S subunit in the ribosome. The sequence is that of Small ribosomal subunit protein uS15 from Phenylobacterium zucineum (strain HLK1).